A 346-amino-acid chain; its full sequence is N-acetyl-gamma-glutamyl-phosphate reductase (346 aa).

Cys-149 is an active-site residue.

Belongs to the NAGSA dehydrogenase family. Type 1 subfamily.

The protein localises to the cytoplasm. The catalysed reaction is N-acetyl-L-glutamate 5-semialdehyde + phosphate + NADP(+) = N-acetyl-L-glutamyl 5-phosphate + NADPH + H(+). Its pathway is amino-acid biosynthesis; L-arginine biosynthesis; N(2)-acetyl-L-ornithine from L-glutamate: step 3/4. In terms of biological role, catalyzes the NADPH-dependent reduction of N-acetyl-5-glutamyl phosphate to yield N-acetyl-L-glutamate 5-semialdehyde. This chain is N-acetyl-gamma-glutamyl-phosphate reductase, found in Geotalea daltonii (strain DSM 22248 / JCM 15807 / FRC-32) (Geobacter daltonii).